The primary structure comprises 286 residues: L-ribulose 3-epimerase (286 aa).

H12, S69, E152, and E158 together coordinate D-allulose. Residues H12, S69, E152, and E158 each contribute to the D-fructose site. The active-site Proton donor/acceptor is the E152. E152 contacts Mn(2+). Position 185 (D185) interacts with Mn(2+). D-allulose is bound by residues H188, H211, R217, and E246. D-fructose is bound by residues H188, H211, R217, and E246. H211 is a binding site for Mn(2+). E246 (proton donor/acceptor) is an active-site residue. E246 serves as a coordination point for Mn(2+).

The protein belongs to the hyi family. In terms of assembly, homodimer. Mn(2+) serves as cofactor.

It catalyses the reaction L-ribulose = L-xylulose. The catalysed reaction is D-ribulose = D-xylulose. The enzyme catalyses D-allulose = keto-D-fructose. It carries out the reaction keto-L-tagatose = keto-L-sorbose. It catalyses the reaction keto-D-tagatose = keto-D-sorbose. Functionally, catalyzes the epimerization of various ketoses at the C(3) position. Exhibits the highest enzymatic activity toward L-ribulose, followed by D-ribulose, D-allulose and D-fructose. Shows lower activity with L-xylulose, L-tagatose, D-xylulose, D-tagatose, L-sorbose, D-sorbose, and weak activity with L-allulose and L-fructose. This Methylomonas sp. (strain DH-1) protein is L-ribulose 3-epimerase.